We begin with the raw amino-acid sequence, 106 residues long: Cell division topological specificity factor (106 aa).

This sequence belongs to the MinE family.

Functionally, prevents the cell division inhibition by proteins MinC and MinD at internal division sites while permitting inhibition at polar sites. This ensures cell division at the proper site by restricting the formation of a division septum at the midpoint of the long axis of the cell. The sequence is that of Cell division topological specificity factor from Prochlorococcus marinus (strain SARG / CCMP1375 / SS120).